The chain runs to 350 residues: Protein-glutamate methylesterase/protein-glutamine glutaminase 1 (350 aa).

The 118-residue stretch at 6–123 (RVLVVDDSAL…GRSVENYAEE (118 aa)) folds into the Response regulatory domain. A 4-aspartylphosphate modification is found at Asp57. Positions 159–350 (LGASGKIIFV…ARRVLGAVSA (192 aa)) constitute a CheB-type methylesterase domain. Active-site residues include Ser171, His197, and Asp293.

Belongs to the CheB family. Phosphorylated by CheA. Phosphorylation of the N-terminal regulatory domain activates the methylesterase activity.

The protein localises to the cytoplasm. It catalyses the reaction [protein]-L-glutamate 5-O-methyl ester + H2O = L-glutamyl-[protein] + methanol + H(+). It carries out the reaction L-glutaminyl-[protein] + H2O = L-glutamyl-[protein] + NH4(+). Involved in chemotaxis. Part of a chemotaxis signal transduction system that modulates chemotaxis in response to various stimuli. Catalyzes the demethylation of specific methylglutamate residues introduced into the chemoreceptors (methyl-accepting chemotaxis proteins or MCP) by CheR. Also mediates the irreversible deamidation of specific glutamine residues to glutamic acid. The polypeptide is Protein-glutamate methylesterase/protein-glutamine glutaminase 1 (Dechloromonas aromatica (strain RCB)).